The following is a 202-amino-acid chain: Recombination protein RecR (202 aa).

Residues 61-76 (CARCNSFTEDDVCVIC) form a C4-type zinc finger. The region spanning 84-179 (SLLCIVETPA…KVTRLARGVP (96 aa)) is the Toprim domain.

This sequence belongs to the RecR family.

Functionally, may play a role in DNA repair. It seems to be involved in an RecBC-independent recombinational process of DNA repair. It may act with RecF and RecO. The polypeptide is Recombination protein RecR (Bordetella avium (strain 197N)).